The primary structure comprises 306 residues: Probable protein ABIL1 (306 aa).

A disordered region spans residues 200-236 (KNSKTNGARQSEFVLEETKATKPASRGKEPSTSPLPK).

This sequence belongs to the ABI family. As to quaternary structure, binds SCAR.

It is found in the cytoplasm. Its subcellular location is the cytoskeleton. In terms of biological role, involved in regulation of actin and microtubule organization. Part of a WAVE complex that activates the Arp2/3 complex. The protein is Probable protein ABIL1 of Oryza sativa subsp. japonica (Rice).